The following is a 418-amino-acid chain: Deubiquitinase and deneddylase Dub1 (418 aa).

Positions 1–10 (MLSPTNSISK) are enriched in polar residues. Residues 1–23 (MLSPTNSISKTAPVPPQDSSKPV) are disordered. A helical membrane pass occupies residues 40 to 60 (TALAVLLVVVTLGLILLFYSF). The interval 72–144 (TRPSTKEQPT…PLPPKAPKPV (73 aa)) is disordered. The span at 86 to 141 (VPLPSPPLAVPRPSTPPPPVISRPSTPPAPTPAISPPSTPSAPKPSTPPPLPPKAP) shows a compositional bias: pro residues. Residues H288, D305, and C358 contribute to the active site.

This sequence belongs to the peptidase C48 family.

The protein localises to the secreted. It is found in the host cell. Its subcellular location is the membrane. Effector proteins function to alter host cell physiology and promote bacterial survival in host tissues. This protease possesses deubiquitinating and deneddylating activities. The protein is Deubiquitinase and deneddylase Dub1 (cdu1) of Chlamydia trachomatis serovar B (strain Jali20/OT).